The chain runs to 447 residues: Glutamyl-tRNA reductase (447 aa).

Substrate is bound by residues 45–48 (TCNR), serine 111, 116–118 (ETE), and glutamine 122. Cysteine 46 functions as the Nucleophile in the catalytic mechanism. 191–196 (GTGKYA) is a binding site for NADP(+).

It belongs to the glutamyl-tRNA reductase family. In terms of assembly, homodimer.

It carries out the reaction (S)-4-amino-5-oxopentanoate + tRNA(Glu) + NADP(+) = L-glutamyl-tRNA(Glu) + NADPH + H(+). The protein operates within porphyrin-containing compound metabolism; protoporphyrin-IX biosynthesis; 5-aminolevulinate from L-glutamyl-tRNA(Glu): step 1/2. Functionally, catalyzes the NADPH-dependent reduction of glutamyl-tRNA(Glu) to glutamate 1-semialdehyde (GSA). This Tropheryma whipplei (strain Twist) (Whipple's bacillus) protein is Glutamyl-tRNA reductase.